The primary structure comprises 490 residues: AP-5 complex subunit mu-1 (490 aa).

Residues 206–476 (KPQVSISITE…LISSDYYIWN (271 aa)) enclose the MHD domain.

It belongs to the adaptor complexes medium subunit family. As to quaternary structure, probably part of the adaptor protein complex 5 (AP-5) a tetramer composed of AP5B1, AP5M1, AP5S1 and AP5Z1.

Its subcellular location is the cytoplasm. It is found in the cytosol. The protein resides in the late endosome membrane. The protein localises to the lysosome membrane. As part of AP-5, a probable fifth adaptor protein complex it may be involved in endosomal transport. The polypeptide is AP-5 complex subunit mu-1 (AP5M1) (Bos taurus (Bovine)).